The sequence spans 567 residues: Hydroxylamine reductase 2 (567 aa).

The [4Fe-4S] cluster site is built by Cys5, Cys8, Cys17, and Cys23. 8 residues coordinate hybrid [4Fe-2O-2S] cluster: His262, Glu286, Cys330, Cys421, Cys449, Cys474, Glu509, and Lys511. Cys421 carries the cysteine persulfide modification.

This sequence belongs to the HCP family. [4Fe-4S] cluster is required as a cofactor. It depends on hybrid [4Fe-2O-2S] cluster as a cofactor.

It is found in the cytoplasm. It carries out the reaction A + NH4(+) + H2O = hydroxylamine + AH2 + H(+). Catalyzes the reduction of hydroxylamine to form NH(3) and H(2)O. The polypeptide is Hydroxylamine reductase 2 (Clostridium acetobutylicum (strain ATCC 824 / DSM 792 / JCM 1419 / IAM 19013 / LMG 5710 / NBRC 13948 / NRRL B-527 / VKM B-1787 / 2291 / W)).